Consider the following 751-residue polypeptide: Catalase-peroxidase (751 aa).

A disordered region spans residues 1-21 (MSNESKCPFHQTAGGGTTNRD). A cross-link (tryptophyl-tyrosyl-methioninium (Trp-Tyr) (with M-270)) is located at residues 90 to 244 (WHSAGTYRIG…LAAVQMGLIY (155 aa)). H91 functions as the Proton acceptor in the catalytic mechanism. The tract at residues 195 to 227 (YGKDQVKAQPPGQGDLVAEPAKHGEEQNRDLSA) is disordered. Over residues 214–227 (PAKHGEEQNRDLSA) the composition is skewed to basic and acidic residues. The segment at residues 244–270 (YVNPEGPEGNPDPVASGKDIRETFGRM) is a cross-link (tryptophyl-tyrosyl-methioninium (Tyr-Met) (with W-90)). H285 provides a ligand contact to heme b. Residues 364 to 385 (GAHQWRPKDGKGAGTVPDAHDP) are disordered.

The protein belongs to the peroxidase family. Peroxidase/catalase subfamily. In terms of assembly, homodimer or homotetramer. It depends on heme b as a cofactor. Formation of the three residue Trp-Tyr-Met cross-link is important for the catalase, but not the peroxidase activity of the enzyme.

It carries out the reaction H2O2 + AH2 = A + 2 H2O. The enzyme catalyses 2 H2O2 = O2 + 2 H2O. In terms of biological role, bifunctional enzyme with both catalase and broad-spectrum peroxidase activity. This Pseudomonas putida (strain ATCC 47054 / DSM 6125 / CFBP 8728 / NCIMB 11950 / KT2440) protein is Catalase-peroxidase.